The primary structure comprises 365 residues: Gibberellin 20 oxidase 1-B (365 aa).

The Fe2OG dioxygenase domain occupies 199–299 (GNDSIMRLNY…RKSLAFFLCP (101 aa)). Positions 224, 226, and 280 each coordinate Fe cation. Arg-290 is a catalytic residue.

This sequence belongs to the iron/ascorbate-dependent oxidoreductase family. GA20OX subfamily. Fe cation is required as a cofactor. L-ascorbate serves as cofactor. As to expression, not detected in nodes and the ear of the elongating stem.

The catalysed reaction is gibberellin A12 + 2 2-oxoglutarate + 3 O2 + H(+) = gibberellin A9 + 2 succinate + 3 CO2 + 2 H2O. The enzyme catalyses gibberellin A53 + 2 2-oxoglutarate + 3 O2 + H(+) = gibberellin A20 + 2 succinate + 3 CO2 + 2 H2O. Key oxidase enzyme in the biosynthesis of gibberellin that catalyzes the conversion of GA12 and GA53 to GA9 and GA20 respectively, via a three-step oxidation at C-20 of the GA skeleton. The polypeptide is Gibberellin 20 oxidase 1-B (GA20ox1B) (Triticum aestivum (Wheat)).